We begin with the raw amino-acid sequence, 380 residues long: Lipoyl synthase, mitochondrial (380 aa).

7 residues coordinate [4Fe-4S] cluster: Cys104, Cys109, Cys115, Cys135, Cys139, Cys142, and Ser350. A Radical SAM core domain is found at 120–339 (EHGTQTATIM…ETRGNELGFL (220 aa)).

It belongs to the radical SAM superfamily. Lipoyl synthase family. It depends on [4Fe-4S] cluster as a cofactor.

The protein resides in the mitochondrion. The enzyme catalyses [[Fe-S] cluster scaffold protein carrying a second [4Fe-4S](2+) cluster] + N(6)-octanoyl-L-lysyl-[protein] + 2 oxidized [2Fe-2S]-[ferredoxin] + 2 S-adenosyl-L-methionine + 4 H(+) = [[Fe-S] cluster scaffold protein] + N(6)-[(R)-dihydrolipoyl]-L-lysyl-[protein] + 4 Fe(3+) + 2 hydrogen sulfide + 2 5'-deoxyadenosine + 2 L-methionine + 2 reduced [2Fe-2S]-[ferredoxin]. It participates in protein modification; protein lipoylation via endogenous pathway; protein N(6)-(lipoyl)lysine from octanoyl-[acyl-carrier-protein]: step 2/2. Functionally, catalyzes the radical-mediated insertion of two sulfur atoms into the C-6 and C-8 positions of the octanoyl moiety bound to the lipoyl domains of lipoate-dependent enzymes, thereby converting the octanoylated domains into lipoylated derivatives. The sequence is that of Lipoyl synthase, mitochondrial from Culex quinquefasciatus (Southern house mosquito).